Here is a 244-residue protein sequence, read N- to C-terminus: Monothiol glutaredoxin-4 (244 aa).

Positions 3–110 (VVEIKSQDQF…FVKSLEILSN (108 aa)) constitute a Thioredoxin domain. Residues 116 to 143 (ANNAKGPKSTSDEESSGSSDDEEDETEE) are disordered. Residues 127 to 143 (DEESSGSSDDEEDETEE) show a composition bias toward acidic residues. The Glutaredoxin domain maps to 146–244 (NARLVKLVQA…DPEYFQHALQ (99 aa)). Glutathione is bound at residue Lys-163. Residue Cys-171 participates in [2Fe-2S] cluster binding. Glutathione-binding positions include Arg-200, Phe-212, and 225-226 (LD).

This sequence belongs to the glutaredoxin family. Monothiol subfamily. Homodimer. Heterodimer with FRA2.

Monothiol glutaredoxin involved in the biogenesis of iron-sulfur clusters. Binds one iron-sulfur cluster per dimer. The iron-sulfur cluster is bound between subunits, and is complexed by a bound glutathione and a cysteine residue from each subunit. This chain is Monothiol glutaredoxin-4 (GRX4), found in Saccharomyces cerevisiae (strain ATCC 204508 / S288c) (Baker's yeast).